Consider the following 218-residue polypeptide: Thiopurine S-methyltransferase (218 aa).

Trp-10, Leu-45, Glu-66, and Arg-123 together coordinate S-adenosyl-L-methionine.

Belongs to the class I-like SAM-binding methyltransferase superfamily. TPMT family.

It localises to the cytoplasm. The catalysed reaction is S-adenosyl-L-methionine + a thiopurine = S-adenosyl-L-homocysteine + a thiopurine S-methylether.. The protein is Thiopurine S-methyltransferase of Pseudomonas aeruginosa (strain UCBPP-PA14).